We begin with the raw amino-acid sequence, 240 residues long: Probable transcriptional regulatory protein SO_3401 (240 aa).

The protein belongs to the TACO1 family.

Its subcellular location is the cytoplasm. This is Probable transcriptional regulatory protein SO_3401 from Shewanella oneidensis (strain ATCC 700550 / JCM 31522 / CIP 106686 / LMG 19005 / NCIMB 14063 / MR-1).